The sequence spans 362 residues: Zinc phosphodiesterase ELAC protein 1 (362 aa).

Positions 62, 64, 66, 67, 181, 252, and 312 each coordinate Zn(2+). The active-site Proton acceptor is the aspartate 66.

The protein belongs to the RNase Z family. As to quaternary structure, homodimer. Zn(2+) is required as a cofactor.

It is found in the cytoplasm. Its subcellular location is the cytosol. The protein localises to the nucleus. The catalysed reaction is Endonucleolytic cleavage of RNA, removing extra 3' nucleotides from tRNA precursor, generating 3' termini of tRNAs. A 3'-hydroxy group is left at the tRNA terminus and a 5'-phosphoryl group is left at the trailer molecule.. Its function is as follows. Zinc phosphodiesterase, which displays some tRNA 3'-processing endonuclease activity. Specifically involved in tRNA repair: acts downstream of the ribosome-associated quality control (RQC) pathway by removing a 2',3'-cyclic phosphate from tRNAs following cleavage by ANKZF1. tRNAs are then processed by TRNT1. The chain is Zinc phosphodiesterase ELAC protein 1 (Elac1) from Mus musculus (Mouse).